The sequence spans 141 residues: ATP synthase epsilon chain (141 aa).

This sequence belongs to the ATPase epsilon chain family. As to quaternary structure, F-type ATPases have 2 components, CF(1) - the catalytic core - and CF(0) - the membrane proton channel. CF(1) has five subunits: alpha(3), beta(3), gamma(1), delta(1), epsilon(1). CF(0) has three main subunits: a, b and c.

It localises to the cell inner membrane. In terms of biological role, produces ATP from ADP in the presence of a proton gradient across the membrane. In Aromatoleum aromaticum (strain DSM 19018 / LMG 30748 / EbN1) (Azoarcus sp. (strain EbN1)), this protein is ATP synthase epsilon chain.